Here is a 428-residue protein sequence, read N- to C-terminus: Glutamate-1-semialdehyde 2,1-aminomutase (428 aa).

At K265 the chain carries N6-(pyridoxal phosphate)lysine.

It belongs to the class-III pyridoxal-phosphate-dependent aminotransferase family. HemL subfamily. As to quaternary structure, homodimer. The cofactor is pyridoxal 5'-phosphate.

It localises to the cytoplasm. It catalyses the reaction (S)-4-amino-5-oxopentanoate = 5-aminolevulinate. The protein operates within porphyrin-containing compound metabolism; protoporphyrin-IX biosynthesis; 5-aminolevulinate from L-glutamyl-tRNA(Glu): step 2/2. This Shewanella loihica (strain ATCC BAA-1088 / PV-4) protein is Glutamate-1-semialdehyde 2,1-aminomutase.